A 500-amino-acid polypeptide reads, in one-letter code: MHLSMGGLLPGLALLASANALALALPLESSVYTVQVTNPFHESLFSCPAASWPKVKLGSENRSQEPSKDLKKILSQISPKRIEATIRKLVSFGTRHTLSTQTNATYGIGAARDWIESEFQRYANASDGRLTVAVVGYDQQPDGRRIPFPVRISDVVATLKGEGDPERVYLVSGHYDSRNSDALDYKGIAPGANDDASGVAVSLELARVMSQRGLPRPKATIVFAAVAGEEQGLYGATFLAQSYRNSSANIEGMFTNDIIGSSTADDGTREPHVVRLFAQGIPPLNVEDQAMRERRIMIGGDNDTPARQLARFVKETAENKHTDMEVSVIYRLDRYLRGGDHRPFLEAGYPAARFTEPNENFAHQHQDIRIDKDPKTGMDIQYGDLPEFCDFDYISRVGKVNAAALWNLAMSPGMPRNVRVNTSDLTNDSKFTWDPPAGGNALVGGYEIVWRSTNAPFWTHKMDVGMVQEATIDLSKDNVIFGIRARGKNGERGVAVLPFP.

A signal peptide spans 1-24; that stretch reads MHLSMGGLLPGLALLASANALALA. Asn-61, Asn-103, and Asn-124 each carry an N-linked (GlcNAc...) asparagine glycan. Zn(2+)-binding residues include His-174, Asp-194, and Glu-230. The N-linked (GlcNAc...) asparagine glycan is linked to Asn-245. Asp-257 provides a ligand contact to Zn(2+). The region spanning 414-500 is the Fibronectin type-III domain; the sequence is MPRNVRVNTS…ERGVAVLPFP (87 aa). Residues Asn-421 and Asn-427 are each glycosylated (N-linked (GlcNAc...) asparagine).

Belongs to the peptidase M28 family. M28B subfamily. The cofactor is Zn(2+).

Its subcellular location is the secreted. This is Probable zinc metalloprotease MGYG_02393 from Arthroderma gypseum (strain ATCC MYA-4604 / CBS 118893) (Microsporum gypseum).